A 280-amino-acid chain; its full sequence is NAD-capped RNA hydrolase NudC (280 aa).

R83 provides a ligand contact to substrate. Zn(2+) contacts are provided by C113, C116, C131, and C134. Position 139 (Y139) interacts with substrate. The 129-residue stretch at 140 to 268 (PRVAPAIIVL…ASRRLLDDAL (129 aa)) folds into the Nudix hydrolase domain. Residues A177, E193, and E197 each coordinate a divalent metal cation. Positions 178–199 (GFVEPSETLEAAVHREVGEEVG) match the Nudix box motif. A substrate-binding site is contributed by 211-218 (QPWPFPHS). E238 contributes to the a divalent metal cation binding site.

It belongs to the Nudix hydrolase family. NudC subfamily. Homodimer. Requires Mg(2+) as cofactor. Mn(2+) is required as a cofactor. It depends on Zn(2+) as a cofactor.

The enzyme catalyses a 5'-end NAD(+)-phospho-ribonucleoside in mRNA + H2O = a 5'-end phospho-adenosine-phospho-ribonucleoside in mRNA + beta-nicotinamide D-ribonucleotide + 2 H(+). The catalysed reaction is NAD(+) + H2O = beta-nicotinamide D-ribonucleotide + AMP + 2 H(+). It catalyses the reaction NADH + H2O = reduced beta-nicotinamide D-ribonucleotide + AMP + 2 H(+). In terms of biological role, mRNA decapping enzyme that specifically removes the nicotinamide adenine dinucleotide (NAD) cap from a subset of mRNAs by hydrolyzing the diphosphate linkage to produce nicotinamide mononucleotide (NMN) and 5' monophosphate mRNA. The NAD-cap is present at the 5'-end of some mRNAs and stabilizes RNA against 5'-processing. Has preference for mRNAs with a 5'-end purine. Catalyzes the hydrolysis of a broad range of dinucleotide pyrophosphates. The protein is NAD-capped RNA hydrolase NudC of Deinococcus radiodurans (strain ATCC 13939 / DSM 20539 / JCM 16871 / CCUG 27074 / LMG 4051 / NBRC 15346 / NCIMB 9279 / VKM B-1422 / R1).